The sequence spans 76 residues: MARFYRRRKFCRFTAEGITHIDYKDVELLKQYISDNGKIVPSRITGTSTKYQRQLATAIKQARYLSLLPYTDNHQG.

It belongs to the bacterial ribosomal protein bS18 family. In terms of assembly, part of the 30S ribosomal subunit. Forms a tight heterodimer with protein bS6.

In terms of biological role, binds as a heterodimer with protein bS6 to the central domain of the 16S rRNA, where it helps stabilize the platform of the 30S subunit. The protein is Small ribosomal subunit protein bS18 of Psychrobacter arcticus (strain DSM 17307 / VKM B-2377 / 273-4).